The chain runs to 695 residues: N-terminal acetyltransferase A complex subunit-like protein C418.02 (695 aa).

10 TPR repeats span residues 8-41 (EAFLFDRSIDQFEKGQYSKSLKTIQSVLKKKPKH), 43-75 (DSVALLGLNLCKLHDSRSALLKCGYASSIDPKS), 76-109 (QFCWHALAIVYRETKDYNNSLKCYQNALAISPNN), 111-143 (SLWYDAAYLQAQLGLYQPLFDNWNRLLQLDSSN), 145-177 (EYRLCFTLSAFLSGNYKESLEQIQYLISSCNLS), 217-250 (FNFEHIKADFAFRQKNYEESIYLYARLLIKFPNR), 262-296 (WNFYKSGGLALDLLLKRTDSLIKTFSEILQTGISV), 365-398 (LWCTYCLCLAHYKLGDYEESNYWLNLAIDHTPTY), 399-432 (PELFLAKAKIFLCMGEIEEALCSFKRSVELDKSD), and 477-510 (VWFLVEDGESLLRQKLYGLALKRFHSIYQIYKKW).

As to quaternary structure, component of the N-terminal acetyltransferase A (NatA) complex.

It is found in the cytoplasm. The protein localises to the nucleus. Functionally, non-catalytic component of the NatA N-terminal acetyltransferase, which catalyzes acetylation of proteins beginning with Met-Ser, Met-Gly and Met-Ala. N-acetylation plays a role in normal eukaryotic translation and processing, protect against proteolytic degradation and protein turnover. This Schizosaccharomyces pombe (strain 972 / ATCC 24843) (Fission yeast) protein is N-terminal acetyltransferase A complex subunit-like protein C418.02.